The following is a 666-amino-acid chain: ATP-dependent RNA helicase MSS116, mitochondrial (666 aa).

The transit peptide at 1-22 (MLRHCSLGLVTTQISAIAPLRL) directs the protein to the mitochondrion. A compositionally biased stretch (basic and acidic residues) spans 38 to 60 (RDRRSSRSREDKPYNSRTRRFDD). Positions 38 to 131 (RDRRSSRSRE…KSYSKGGNTS (94 aa)) are disordered. Residues 120 to 131 (NTKSYSKGGNTS) are compositionally biased toward polar residues. The Q motif motif lies at 159–187 (SLLEKNVISRDLYDSISRMGFEQLTPVQQ). A Helicase ATP-binding domain is found at 192-379 (PIITNSDSDI…NDIMNKEECL (188 aa)). 205-212 (AKTGTGKT) lines the ATP pocket. The short motif at 320-323 (DEAD) is the DEAD box element. The region spanning 408–560 (NLYAAIEHIR…NIRKFEAQPH (153 aa)) is the Helicase C-terminal domain.

The protein belongs to the DEAD box helicase family. DDX18/HAS1 subfamily.

The protein resides in the mitochondrion matrix. The catalysed reaction is ATP + H2O = ADP + phosphate + H(+). Functionally, ATP-dependent RNA helicase required for mitochondrial splicing of group I and II introns. Also required for efficient mitochondrial translation. The polypeptide is ATP-dependent RNA helicase MSS116, mitochondrial (MSS116) (Candida glabrata (strain ATCC 2001 / BCRC 20586 / JCM 3761 / NBRC 0622 / NRRL Y-65 / CBS 138) (Yeast)).